The chain runs to 326 residues: Glyoxylate/hydroxypyruvate reductase B (326 aa).

Active-site residues include Arg237 and Glu266. Residue His285 is the Proton donor of the active site.

Belongs to the D-isomer specific 2-hydroxyacid dehydrogenase family. GhrB subfamily. Homodimer.

It localises to the cytoplasm. The enzyme catalyses glycolate + NADP(+) = glyoxylate + NADPH + H(+). It catalyses the reaction (R)-glycerate + NAD(+) = 3-hydroxypyruvate + NADH + H(+). The catalysed reaction is (R)-glycerate + NADP(+) = 3-hydroxypyruvate + NADPH + H(+). Catalyzes the NADPH-dependent reduction of glyoxylate and hydroxypyruvate into glycolate and glycerate, respectively. The protein is Glyoxylate/hydroxypyruvate reductase B of Yersinia pestis bv. Antiqua (strain Nepal516).